The following is a 304-amino-acid chain: uncharacterized protein (304 aa).

The protein belongs to the histone deacetylase family.

Putative deacetylase. This is an uncharacterized protein from Synechocystis sp. (strain ATCC 27184 / PCC 6803 / Kazusa).